The following is a 222-amino-acid chain: Small ribosomal subunit protein uS2 (222 aa).

The protein belongs to the universal ribosomal protein uS2 family.

The polypeptide is Small ribosomal subunit protein uS2 (Karelsulcia muelleri (strain GWSS) (Sulcia muelleri)).